Here is a 561-residue protein sequence, read N- to C-terminus: Alpha-1D adrenergic receptor (561 aa).

The Extracellular segment spans residues 1–90 (MTFRDILSVT…VGGLVVSAQG (90 aa)). Residues 10–71 (TFEGPRSSSS…SSTGEPGAAA (62 aa)) are disordered. A compositionally biased stretch (gly residues) spans 21 to 56 (GGSGAGGGAGTVGPEGGAVGGVPGATGGGAVVGTGS). N-linked (GlcNAc...) asparagine glycans are attached at residues N60 and N76. Residues 91-115 (VGVGVFLAAFILTAVAGNLLVILSV) traverse the membrane as a helical segment. Topologically, residues 116–127 (ACNRHLQTVTNY) are cytoplasmic. Residues 128–153 (FIVNLAVADLLLSAAVLPFSATMEVL) traverse the membrane as a helical segment. At 154-163 (GFWAFGRTFC) the chain is on the extracellular side. A helical membrane pass occupies residues 164–186 (DVWAAVDVLCCTASILSLCTISV). The Cytoplasmic segment spans residues 187–207 (DRYVGVRHSLKYPAIMTERKA). The chain crosses the membrane as a helical span at residues 208–232 (AAILALLWAVALVVSVGPLLGWKEP). The Extracellular portion of the chain corresponds to 233–245 (VPPDERFCGITEE). Residues 246–269 (VGYAIFSSVCSFYLPMAVIVVMYC) form a helical membrane-spanning segment. At 270–342 (RVYVVARSTT…KFSREKKAAK (73 aa)) the chain is on the cytoplasmic side. A helical membrane pass occupies residues 343 to 367 (TLAIVVGVFVLCWFPFFFVLPLGSL). Topologically, residues 368-374 (FPQLKPS) are extracellular. Residues 375–399 (EGVFKVIFWLGYFNSCVNPLIYPCS) traverse the membrane as a helical segment. The Cytoplasmic segment spans residues 400–561 (SREFKRAFLR…DYSNLRETDI (162 aa)). C413 carries the S-palmitoyl cysteine lipid modification. The tract at residues 452 to 481 (APLALTAHPGAGSADTPETQDSVSSSRKPA) is disordered. Positions 467 to 479 (TPETQDSVSSSRK) are enriched in polar residues.

It belongs to the G-protein coupled receptor 1 family. Adrenergic receptor subfamily. ADRA1D sub-subfamily. In terms of assembly, interacts with FLNA (via filamin repeat 21); increases PKA-mediated phosphorylation of FLNA. Palmitoylated. Palmitoylation by ZDHHC21 may increase the expression of the receptor and regulate downstream signaling. Vas deferens, hippocampus, cerebral cortex, aorta, brain stem, heart and spleen.

It localises to the cell membrane. In terms of biological role, this alpha-adrenergic receptor mediates its effect through the influx of extracellular calcium. The chain is Alpha-1D adrenergic receptor (Adra1d) from Rattus norvegicus (Rat).